Reading from the N-terminus, the 156-residue chain is Persephin (156 aa).

Positions 1-21 are cleaved as a signal peptide; that stretch reads MAAGRLRILFLLLLSLHLGLG. 3 disulfide bridges follow: C66/C124, C93/C152, and C97/C154.

This sequence belongs to the TGF-beta family. GDNF subfamily. As to quaternary structure, homodimer; disulfide-linked. Interacts with GFRA4 coreceptor and RET: forms a 2:2:2 ternary complex composed of PSPN ligand, GFRA4 and RET receptor. Expressed at low levels in substantia nigra. Cochlea.

The protein resides in the secreted. Its function is as follows. Growth factor that exhibits neurotrophic activity on mesencephalic dopaminergic and motor neurons. Acts by binding to its coreceptor, GFRA4, leading to autophosphorylation and activation of the RET receptor. This chain is Persephin, found in Rattus norvegicus (Rat).